The primary structure comprises 112 residues: uncharacterized protein (112 aa).

A signal peptide spans 1 to 21 (MKTLFTSVVLCGALVVSSSFA). 2 consecutive HhH domains span residues 49–79 (DKLN…IVQY) and 80–109 (REKH…NRDR).

This is an uncharacterized protein from Haemophilus influenzae (strain ATCC 51907 / DSM 11121 / KW20 / Rd).